A 44-amino-acid chain; its full sequence is Photosystem I reaction center subunit IX (44 aa).

The helical transmembrane segment at 7–27 (YLSVAPVISTLWFGSLAGLLI) threads the bilayer.

It belongs to the PsaJ family.

The protein localises to the plastid. It localises to the chloroplast thylakoid membrane. May help in the organization of the PsaE and PsaF subunits. This is Photosystem I reaction center subunit IX from Ceratophyllum demersum (Rigid hornwort).